The primary structure comprises 446 residues: Phosphoglucosamine mutase (446 aa).

Ser100 acts as the Phosphoserine intermediate in catalysis. Ser100, Asp241, Asp243, and Asp245 together coordinate Mg(2+). Phosphoserine is present on Ser100.

This sequence belongs to the phosphohexose mutase family. It depends on Mg(2+) as a cofactor. Activated by phosphorylation.

The enzyme catalyses alpha-D-glucosamine 1-phosphate = D-glucosamine 6-phosphate. Catalyzes the conversion of glucosamine-6-phosphate to glucosamine-1-phosphate. The sequence is that of Phosphoglucosamine mutase from Methylobacterium nodulans (strain LMG 21967 / CNCM I-2342 / ORS 2060).